The sequence spans 248 residues: Pyridoxal 4-dehydrogenase (248 aa).

11–35 (LVTGAAQGIGKAIAARLAADGATVI) is an NAD(+) binding site. Ser-141 serves as a coordination point for substrate. Catalysis depends on Tyr-154, which acts as the Proton acceptor.

The protein belongs to the short-chain dehydrogenases/reductases (SDR) family. As to quaternary structure, homotetramer.

It carries out the reaction pyridoxal + NAD(+) = 4-pyridoxolactone + NADH + H(+). Its pathway is cofactor degradation; B6 vitamer degradation; 4-pyridoxate from pyridoxal: step 1/2. Involved in the degradation of pyridoxine or pyridoxamine (free, phosphate-unbound, forms of vitamin B6). Oxidizes pyridoxal to 4-pyridoxolactone, but does not have activity toward pyridoxal 5'-phosphate, pyridoxine, pyridoxamine, pyridoxamine 5'-phosphate, 4-phthalaldehyde, 2-nitrobenzaldehyde, pyridine, formaldehyde, 2-carboxybenzaldehyde or sugars. This Mesorhizobium japonicum (strain LMG 29417 / CECT 9101 / MAFF 303099) (Mesorhizobium loti (strain MAFF 303099)) protein is Pyridoxal 4-dehydrogenase.